The chain runs to 309 residues: Probable 2,4-dienoyl-CoA reductase decr-1.2 [(3E)-enoyl-CoA-producing] (309 aa).

NADP(+)-binding positions include 28 to 60 (VLVT…RRME), 32 to 37 (GGGTGI), Arg-57, and Asp-83. Arg-57 is a binding site for substrate. Substrate-binding residues include Phe-116 and Ser-124. Tyr-166 (proton acceptor) is an active-site residue. Residues Lys-181 and 207 to 210 (PGPI) contribute to the NADP(+) site. Arg-218 contributes to the substrate binding site.

It belongs to the short-chain dehydrogenases/reductases (SDR) family. 2,4-dienoyl-CoA reductase subfamily.

It catalyses the reaction a (2E,4E)-dienoyl-CoA + NADPH + H(+) = a 4,5-saturated-(3E)-enoyl-CoA + NADP(+). It carries out the reaction a (2E,4Z)-dienoyl-CoA + NADPH + H(+) = a 4,5-saturated-(3E)-enoyl-CoA + NADP(+). In terms of biological role, auxiliary enzyme of beta-oxidation. It participates in the metabolism of unsaturated fatty enoyl-CoA esters having double bonds in both even- and odd-numbered positions. Catalyzes the NADP-dependent reduction of 2,4-dienoyl-CoA to yield trans-3-enoyl-CoA. The sequence is that of Probable 2,4-dienoyl-CoA reductase decr-1.2 [(3E)-enoyl-CoA-producing] from Caenorhabditis elegans.